Reading from the N-terminus, the 1069-residue chain is Cellulose synthase A catalytic subunit 5 [UDP-forming] (1069 aa).

Methionine 1 carries the N-acetylmethionine modification. At 1–265 the chain is on the cytoplasmic side; the sequence is MNTGGRLIAG…KSSKINPYRM (265 aa). Positions 39, 42, 58, 61, 66, 69, 81, and 84 each coordinate Zn(2+). The RING-type; degenerate zinc finger occupies 39-85; it reads CQICGDEIELSVDGESFVACNECAFPVCRPCYEYERREGNQSCPQCK. Residues serine 229 and serine 230 each carry the phosphoserine modification. Residues 266–286 form a helical membrane-spanning segment; it reads LIVLRLVILGLFFHYRILHPV. Topologically, residues 287–288 are extracellular; that stretch reads ND. The helical transmembrane segment at 289-309 threads the bilayer; it reads AYALWLISVICEIWFAVSWVL. Over 310 to 853 the chain is Cytoplasmic; it reads DQFPKWYPIE…INSVVYPWTS (544 aa). UDP-alpha-D-glucose-binding residues include serine 348, lysine 354, glutamate 355, and aspartate 384. Aspartate 384 is an active-site residue. Residues 438–464 are a coiled coil; it reads VRERRAMKRDYEEFKVKINALVATAQK. Residue lysine 525 coordinates UDP-alpha-D-glucose. Lysine 526 and aspartate 550 together coordinate Mn(2+). The active site involves aspartate 770. A helical transmembrane segment spans residues 854–874; sequence IPLLVYCSLPAICLLTGKFIV. Residues 875–879 are Extracellular-facing; the sequence is PEISN. A helical transmembrane segment spans residues 880-900; it reads YASILFMALFGSIAVTGILEM. Over 901 to 915 the chain is Cytoplasmic; it reads QWGKVGIDDWWRNEQ. A helical membrane pass occupies residues 916 to 936; that stretch reads FWVIGGVSAHLFALFQGLLKV. Topologically, residues 937-965 are extracellular; the sequence is LAGVETNFTVTSKAADDGEFSELYIFKWT. The N-linked (GlcNAc...) asparagine glycan is linked to asparagine 943. Residues 966–986 traverse the membrane as a helical segment; that stretch reads SLLIPPTTLLIINVIGVIVGI. Topologically, residues 987 to 997 are cytoplasmic; sequence SDAISNGYDSW. A helical transmembrane segment spans residues 998-1018; sequence GPLFGRLFFAFWVILHLYPFL. The Extracellular portion of the chain corresponds to 1019–1027; that stretch reads KGLLGKQDR. The helical transmembrane segment at 1028 to 1048 threads the bilayer; the sequence is MPTIILVWSILLASILTLLWV. Over 1049-1069 the chain is Cytoplasmic; the sequence is RVNPFVAKGGPILEICGLDCL.

Belongs to the glycosyltransferase 2 family. Plant cellulose synthase subfamily. Zn(2+) serves as cofactor. Requires Mn(2+) as cofactor. As to expression, expressed in young plants, stems and flowers.

The protein resides in the cell membrane. The catalysed reaction is [(1-&gt;4)-beta-D-glucosyl](n) + UDP-alpha-D-glucose = [(1-&gt;4)-beta-D-glucosyl](n+1) + UDP + H(+). The protein operates within glycan metabolism; plant cellulose biosynthesis. Functionally, catalytic subunit of cellulose synthase terminal complexes ('rosettes'), required for beta-1,4-glucan microfibril crystallization, a major mechanism of the cell wall formation. The chain is Cellulose synthase A catalytic subunit 5 [UDP-forming] from Arabidopsis thaliana (Mouse-ear cress).